The following is a 508-amino-acid chain: Light-independent protochlorophyllide reductase subunit B (508 aa).

Asp-36 is a binding site for [4Fe-4S] cluster. Residue Asp-294 is the Proton donor of the active site. Substrate is bound at residue 429-430 (GM).

This sequence belongs to the ChlB/BchB/BchZ family. In terms of assembly, protochlorophyllide reductase is composed of three subunits; ChlL, ChlN and ChlB. Forms a heterotetramer of two ChlB and two ChlN subunits. The cofactor is [4Fe-4S] cluster.

It carries out the reaction chlorophyllide a + oxidized 2[4Fe-4S]-[ferredoxin] + 2 ADP + 2 phosphate = protochlorophyllide a + reduced 2[4Fe-4S]-[ferredoxin] + 2 ATP + 2 H2O. Its pathway is porphyrin-containing compound metabolism; chlorophyll biosynthesis (light-independent). Its function is as follows. Component of the dark-operative protochlorophyllide reductase (DPOR) that uses Mg-ATP and reduced ferredoxin to reduce ring D of protochlorophyllide (Pchlide) to form chlorophyllide a (Chlide). This reaction is light-independent. The NB-protein (ChlN-ChlB) is the catalytic component of the complex. This is Light-independent protochlorophyllide reductase subunit B from Nostoc punctiforme (strain ATCC 29133 / PCC 73102).